A 379-amino-acid polypeptide reads, in one-letter code: Homoserine O-acetyltransferase (379 aa).

Positions N52 to E356 constitute an AB hydrolase-1 domain. The Nucleophile role is filled by S157. Residue R227 coordinates substrate. Residues D320 and H350 contribute to the active site. A substrate-binding site is contributed by D351.

The protein belongs to the AB hydrolase superfamily. MetX family. In terms of assembly, homodimer.

It localises to the cytoplasm. The catalysed reaction is L-homoserine + acetyl-CoA = O-acetyl-L-homoserine + CoA. The protein operates within amino-acid biosynthesis; L-methionine biosynthesis via de novo pathway; O-acetyl-L-homoserine from L-homoserine: step 1/1. In terms of biological role, transfers an acetyl group from acetyl-CoA to L-homoserine, forming acetyl-L-homoserine. The protein is Homoserine O-acetyltransferase of Mycobacterium ulcerans (strain Agy99).